The chain runs to 597 residues: Peptidyl-prolyl cis-trans isomerase-like 2 (597 aa).

The U-box domain occupies 41–114 (KKLPFNFCAA…TTDSDENKGD (74 aa)). Residues 328-483 (NKGYVRMETN…NKIVIKDMII (156 aa)) enclose the PPIase cyclophilin-type domain. The segment covering 495–519 (KKQKEGEEERKREVARQGGTEDDRT) has biased composition (basic and acidic residues). Disordered stretches follow at residues 495–521 (KKQK…RTTW) and 560–597 (ATTT…FDGW).

The protein belongs to the cyclophilin-type PPIase family. PPIL2 subfamily.

It localises to the nucleus. The catalysed reaction is [protein]-peptidylproline (omega=180) = [protein]-peptidylproline (omega=0). It catalyses the reaction S-ubiquitinyl-[E2 ubiquitin-conjugating enzyme]-L-cysteine + [acceptor protein]-L-lysine = [E2 ubiquitin-conjugating enzyme]-L-cysteine + N(6)-ubiquitinyl-[acceptor protein]-L-lysine.. Its pathway is protein modification; protein ubiquitination. Its function is as follows. May catalyze the cis-trans isomerization of proline imidic peptide bonds in oligopeptides thereby assisting the folding of proteins. May also function as a chaperone, playing a role in intracellular transport of proteins. May also have a protein ubiquitin ligase activity acting as an E3 ubiquitin protein ligase or as a ubiquitin-ubiquitin ligase promoting elongation of ubiquitin chains on proteins. This chain is Peptidyl-prolyl cis-trans isomerase-like 2 (ppi-2), found in Neurospora crassa (strain ATCC 24698 / 74-OR23-1A / CBS 708.71 / DSM 1257 / FGSC 987).